Reading from the N-terminus, the 530-residue chain is T-box transcription factor TBX21 (530 aa).

Residues 1 to 55 (MGIVEPGCGDMLTGTEPMPSDEGRGPGADQQHRFFYPEPGAQDPTDRRAGSSLGT) form a disordered region. S52 bears the Phosphoserine mark. A Phosphothreonine modification is found at T55. Phosphotyrosine occurs at positions 76 and 117. The T-box DNA-binding region spans 140–325 (LSNHLLWSKF…NNPFAKGFRE (186 aa)). Phosphotyrosine; by ABL1 is present on Y219. At S224 the chain carries Phosphoserine. Y265 is subject to Phosphotyrosine; by ABL1. T302 bears the Phosphothreonine mark. Y304 is modified (phosphotyrosine; by ABL1). K313 participates in a covalent cross-link: Glycyl lysine isopeptide (Lys-Gly) (interchain with G-Cter in ubiquitin). The segment at 444 to 530 (AGWFRPMRTL…EGQFYNYFPN (87 aa)) is disordered. Residues 462–482 (SEEQGSSPSLWPEVTSLQPEP) are compositionally biased toward polar residues. Residues 498–515 (SPYPSSGDSSSPAGAPSP) show a composition bias toward low complexity. The residue at position 508 (S508) is a Phosphoserine. Y525 is modified (phosphotyrosine; by ITK).

As to quaternary structure, interacts with RUNX1 and RUNX3. Interacts with ITK. The phosphorylated form (at Tyr-525) interacts with GATA3. Interacts with ABL1. Interacts with RELA. The phosphorylated form (at Thr-302) interacts with NFATC2. Interacts with KDM6B. Interacts with SMARCA4 in a KDM6B-dependent manner. Interacts with CCTN1 and CDK9. Interacts with USP10. Phosphorylations at Ser-52, Tyr-76, Ser-224 and Ser-508 are regulated by mTORC1. Phosphorylation at Tyr-525 is essential for its interaction GATA3. Phosphorylation at Tyr-219, Tyr-265 and Tyr-304 enhances its transcriptional activator activity. Phosphorylation at Thr-302 is required for its interaction with NFATC2. Post-translationally, ubiquitinated at Lys-313, leading to its degradation by the proteasome. Ubiquitination is essential for controlling protein stability, binding to the T-box-binding element of the IFN-gamma promoter, and for interaction with NFATC2 through induction of phosphorylation at Thr-302. Deubiquitinated by USP10 leading to its stabilization. T-cell specific. Expressed in regulatory T (TReg) cells.

The protein localises to the nucleus. In terms of biological role, lineage-defining transcription factor which initiates Th1 lineage development from naive Th precursor cells both by activating Th1 genetic programs and by repressing the opposing Th2 and Th17 genetic programs. Activates transcription of a set of genes important for Th1 cell function, including those encoding IFN-gamma and the chemokine receptor CXCR3. Activates IFNG and CXCR3 genes in part by recruiting chromatin remodeling complexes including KDM6B, a SMARCA4-containing SWI/SNF-complex, and an H3K4me2-methyltransferase complex to their promoters and all of these complexes serve to establish a more permissive chromatin state conducive with transcriptional activation. Can activate Th1 genes also via recruitment of Mediator complex and P-TEFb (composed of CDK9 and CCNT1/cyclin-T1) in the form of the super elongation complex (SEC) to super-enhancers and associated genes in activated Th1 cells. Inhibits the Th17 cell lineage commitment by blocking RUNX1-mediated transactivation of Th17 cell-specific transcriptinal regulator RORC. Inhibits the Th2 cell lineage commitment by suppressing the production of Th2 cytokines, such as IL-4, IL-5, and IL- 13, via repression of transcriptional regulators GATA3 and NFATC2. Protects Th1 cells from amplifying aberrant type-I IFN response in an IFN-gamma abundant microenvironment by acting as a repressor of type-I IFN transcription factors and type-I IFN- stimulated genes. Acts as a regulator of antiviral B-cell responses; controls chronic viral infection by promoting the antiviral antibody IgG2a isotype switching and via regulation of a broad antiviral gene expression program. The protein is T-box transcription factor TBX21 (Tbx21) of Mus musculus (Mouse).